The chain runs to 728 residues: 1,4-alpha-glucan branching enzyme GlgB (728 aa).

Aspartate 405 acts as the Nucleophile in catalysis. Glutamate 458 (proton donor) is an active-site residue.

Belongs to the glycosyl hydrolase 13 family. GlgB subfamily. As to quaternary structure, monomer.

The enzyme catalyses Transfers a segment of a (1-&gt;4)-alpha-D-glucan chain to a primary hydroxy group in a similar glucan chain.. Its pathway is glycan biosynthesis; glycogen biosynthesis. Its function is as follows. Catalyzes the formation of the alpha-1,6-glucosidic linkages in glycogen by scission of a 1,4-alpha-linked oligosaccharide from growing alpha-1,4-glucan chains and the subsequent attachment of the oligosaccharide to the alpha-1,6 position. The sequence is that of 1,4-alpha-glucan branching enzyme GlgB from Escherichia coli O6:H1 (strain CFT073 / ATCC 700928 / UPEC).